The sequence spans 499 residues: Chaperone SurA (499 aa).

The signal sequence occupies residues M1 to A36. PpiC domains follow at residues P231–A333 and I352–N450.

Its subcellular location is the periplasm. The enzyme catalyses [protein]-peptidylproline (omega=180) = [protein]-peptidylproline (omega=0). Functionally, chaperone involved in the correct folding and assembly of outer membrane proteins. Recognizes specific patterns of aromatic residues and the orientation of their side chains, which are found more frequently in integral outer membrane proteins. May act in both early periplasmic and late outer membrane-associated steps of protein maturation. This Cupriavidus pinatubonensis (strain JMP 134 / LMG 1197) (Cupriavidus necator (strain JMP 134)) protein is Chaperone SurA.